Here is a 301-residue protein sequence, read N- to C-terminus: Protoheme IX farnesyltransferase 1 (301 aa).

9 consecutive transmembrane segments (helical) span residues 29-49, 51-71, 101-121, 123-143, 150-170, 177-197, 223-243, 244-264, and 274-294; these read VVAL…PHAV, VQPL…AAAL, ALIF…SLVN, LTAW…TAYL, NIVI…TAVT, ALLL…ALAI, CILL…LVGM, CGPV…YKAW, and LAMQ…MALL.

Belongs to the UbiA prenyltransferase family. Protoheme IX farnesyltransferase subfamily.

The protein resides in the cell inner membrane. The enzyme catalyses heme b + (2E,6E)-farnesyl diphosphate + H2O = Fe(II)-heme o + diphosphate. The protein operates within porphyrin-containing compound metabolism; heme O biosynthesis; heme O from protoheme: step 1/1. Functionally, converts heme B (protoheme IX) to heme O by substitution of the vinyl group on carbon 2 of heme B porphyrin ring with a hydroxyethyl farnesyl side group. This is Protoheme IX farnesyltransferase 1 from Shewanella baltica (strain OS195).